Here is a 93-residue protein sequence, read N- to C-terminus: Small ribosomal subunit protein uS19 (93 aa).

This sequence belongs to the universal ribosomal protein uS19 family.

Its function is as follows. Protein S19 forms a complex with S13 that binds strongly to the 16S ribosomal RNA. The polypeptide is Small ribosomal subunit protein uS19 (Limosilactobacillus fermentum (strain NBRC 3956 / LMG 18251) (Lactobacillus fermentum)).